A 455-amino-acid polypeptide reads, in one-letter code: Putative O-acetyltransferase SAT14 (455 aa).

The protein belongs to the lysine N-acyltransferase MbtK family.

Its pathway is mycotoxin biosynthesis. Putative O-acetyltransferase; part of the satratoxin SC2 cluster involved in the biosynthesis of satratoxins, trichothecene mycotoxins that are associated with human food poisonings. Satratoxins are suggested to be made by products of multiple gene clusters (SC1, SC2 and SC3) that encode 21 proteins in all, including polyketide synthases, acetyltransferases, and other enzymes expected to modify the trichothecene skeleton. SC1 encodes 10 proteins, SAT1 to SAT10. The largest are SAT8, which encodes a putative polyketide synthase (PKS) with a conventional non-reducing architecture, and SAT10, a putative protein containing four ankyrin repeats and thus may be involved in protein scaffolding. The putative short-chain reductase SAT3 may assist the PKS in some capacity. SAT6 contains a secretory lipase domain and acts probably as a trichothecene esterase. SAT5 encodes a putative acetyltransferase, and so, with SAT6, may affect endogenous protection from toxicity. The probable transcription factor SAT9 may regulate the expression of the SC1 cluster. SC2 encodes proteins SAT11 to SAT16, the largest of which encodes the putative reducing PKS SAT13. SAT11 is a cytochrome P450 monooxygenase, while SAT14 and SAT16 are probable acetyltransferases. The SC2 cluster may be regulated by the transcription factor SAT15. SC3 is a small cluster that encodes 5 proteins, SAT17 to SAT21. SAT21 is a putative MFS-type transporter which may have a role in exporting secondary metabolites. The four other proteins putatively encoded in SC3 include the taurine hydroxylase-like protein SAT17, the O-methyltransferase SAT18, the acetyltransferase SAT19, and the Cys6-type zinc finger SAT20, the latter being probably involved in regulation of SC3 expression. The sequence is that of Putative O-acetyltransferase SAT14 from Stachybotrys chartarum (strain CBS 109288 / IBT 7711) (Toxic black mold).